The chain runs to 79 residues: Short neurotoxin 2 (79 aa).

A signal peptide spans 1–21 (MKTLLLTLVMVTIMCLDLGYT). 4 disulfides stabilise this stretch: cysteine 24-cysteine 41, cysteine 34-cysteine 59, cysteine 63-cysteine 71, and cysteine 72-cysteine 77.

Belongs to the three-finger toxin family. Short-chain subfamily. Type III alpha-neurotoxin sub-subfamily. Expressed by the venom gland.

It localises to the secreted. Functionally, binds with high affinity to muscle nicotinic acetylcholine receptor (nAChR) and hinders acetylcholine binding to the receptor, thereby impairing neuromuscular transmission. Competes with the binding of alpha-bungarotoxin on muscle AChR (from Torpedo) with an IC(50) of 0.30 uM. Causes muscle paralysis, spasms and increased respiration. The protein is Short neurotoxin 2 of Pseudonaja textilis (Eastern brown snake).